The following is a 621-amino-acid chain: Type 2 DNA topoisomerase 6 subunit B (621 aa).

Residues Asn48, Asp80, 101-102 (SR), 111-118 (GQQGIGIS), and Lys435 contribute to the ATP site.

Belongs to the TOP6B family. As to quaternary structure, homodimer. Heterotetramer of two Top6A and two Top6B chains.

The catalysed reaction is ATP-dependent breakage, passage and rejoining of double-stranded DNA.. Its function is as follows. Relaxes both positive and negative superturns and exhibits a strong decatenase activity. The protein is Type 2 DNA topoisomerase 6 subunit B of Methanosarcina mazei (strain ATCC BAA-159 / DSM 3647 / Goe1 / Go1 / JCM 11833 / OCM 88) (Methanosarcina frisia).